A 210-amino-acid polypeptide reads, in one-letter code: MDKNKNISMAVIKRLPKYHRYLNELMKNDVDRISSKELGEKIGFTASQIRQDLNCFGDFGQQGYGYNVKELYTQINSILGLDKEYNAVLIGAGNIGQAIANYTRFDKLGIMITAIFDANPKLIGIKIRDIEIRDIDELGSFLKSDSVDIGVICVPKKSAQRVSDELINGGIRGIWNFAPIDLAVPKDVKVENVHLSESVSTLIYQLHQQR.

A DNA-binding region (H-T-H motif) is located at residues 17–56; sequence KYHRYLNELMKNDVDRISSKELGEKIGFTASQIRQDLNCF. 91–96 contributes to the NAD(+) binding site; that stretch reads GAGNIG.

Belongs to the transcriptional regulatory Rex family. In terms of assembly, homodimer.

The protein resides in the cytoplasm. Functionally, modulates transcription in response to changes in cellular NADH/NAD(+) redox state. This chain is Redox-sensing transcriptional repressor Rex, found in Clostridium botulinum (strain Eklund 17B / Type B).